Reading from the N-terminus, the 419-residue chain is Serine hydroxymethyltransferase (419 aa).

(6S)-5,6,7,8-tetrahydrofolate contacts are provided by residues leucine 121 and 125–127 (GHL). Residue lysine 230 is modified to N6-(pyridoxal phosphate)lysine.

This sequence belongs to the SHMT family. Homodimer. It depends on pyridoxal 5'-phosphate as a cofactor.

The protein resides in the cytoplasm. The catalysed reaction is (6R)-5,10-methylene-5,6,7,8-tetrahydrofolate + glycine + H2O = (6S)-5,6,7,8-tetrahydrofolate + L-serine. It functions in the pathway one-carbon metabolism; tetrahydrofolate interconversion. It participates in amino-acid biosynthesis; glycine biosynthesis; glycine from L-serine: step 1/1. In terms of biological role, catalyzes the reversible interconversion of serine and glycine with tetrahydrofolate (THF) serving as the one-carbon carrier. This reaction serves as the major source of one-carbon groups required for the biosynthesis of purines, thymidylate, methionine, and other important biomolecules. Also exhibits THF-independent aldolase activity toward beta-hydroxyamino acids, producing glycine and aldehydes, via a retro-aldol mechanism. The chain is Serine hydroxymethyltransferase from Vesicomyosocius okutanii subsp. Calyptogena okutanii (strain HA).